The sequence spans 318 residues: UAP56-interacting factor (318 aa).

Met-1 is subject to N-acetylmethionine. A disordered region spans residues 1-27 (MNRFSTRLMGATATPPPAPPKARSNEN). Thr-14 carries the post-translational modification Phosphothreonine. Ser-24 bears the Phosphoserine mark. Positions 27–45 (NLDKIDMSLDDIIKLNRKE) match the UAP56-binding motif motif. Ser-61 and Ser-118 each carry phosphoserine. Lys-140 participates in a covalent cross-link: Glycyl lysine isopeptide (Lys-Gly) (interchain with G-Cter in SUMO1). Over residues 163–180 (LNRKNNIPNNFTRSGNKL) the composition is skewed to polar residues. Residues 163–183 (LNRKNNIPNNFTRSGNKLSHQ) form a disordered region. Residue Lys-261 forms a Glycyl lysine isopeptide (Lys-Gly) (interchain with G-Cter in SUMO2) linkage.

The protein belongs to the UIF family. Interacts with DDX39B/UAP56 and NXF1; interaction with DDX39B/UAP56 and NXF1 are mutually exclusive. Interacts with SSRP1; required for its recruitment to mRNAs. Interacts with CHTOP.

It is found in the nucleus. It localises to the nucleoplasm. The protein resides in the nucleus speckle. Functionally, required for mRNA export from the nucleus to the cytoplasm. Acts as an adapter that uses the DDX39B/UAP56-NFX1 pathway to ensure efficient mRNA export and delivering to the nuclear pore. Associates with spliced and unspliced mRNAs simultaneously with ALYREF/THOC4. In Bos taurus (Bovine), this protein is UAP56-interacting factor (FYTTD1).